Reading from the N-terminus, the 583-residue chain is Long-chain-fatty-acid--AMP ligase FadD26 (583 aa).

This sequence belongs to the ATP-dependent AMP-binding enzyme family.

It catalyses the reaction holo-[(phenol)carboxyphthiodiolenone synthase] + a long-chain fatty acid + ATP = a long-chain fatty acyl-[(phenol)carboxyphthiodiolenone synthase] + AMP + diphosphate. The catalysed reaction is eicosanoate + holo-[(phenol)carboxyphthiodiolenone synthase] + ATP = icosanoyl-[(phenol)carboxyphthiodiolenone synthase] + AMP + diphosphate. It carries out the reaction holo-[(phenol)carboxyphthiodiolenone synthase] + docosanoate + ATP = docosanoyl-[(phenol)carboxyphthiodiolenone synthase] + AMP + diphosphate. It functions in the pathway lipid metabolism; fatty acid biosynthesis. Functionally, catalyzes the activation of long-chain fatty acids as acyl-adenylates (acyl-AMP), which are then transferred to the multifunctional polyketide synthase PpsA for further chain extension. Catalyzes the adenylation of the long-chain fatty acids eicosanoate (C20) or docosanoate (C22), and potentially the very-long-chain fatty acid lignocerate (C24). Involved in the biosynthesis of phthiocerol dimycocerosate (DIM A) and phthiodiolone dimycocerosate (DIM B). This chain is Long-chain-fatty-acid--AMP ligase FadD26 (fadD26), found in Mycobacterium tuberculosis (strain CDC 1551 / Oshkosh).